Here is a 452-residue protein sequence, read N- to C-terminus: tRNA modification GTPase MnmE (452 aa).

(6S)-5-formyl-5,6,7,8-tetrahydrofolate is bound by residues Arg-21, Glu-78, and Lys-118. Positions 214–375 constitute a TrmE-type G domain; sequence GMKVVIAGRP…LREHLKQAMG (162 aa). K(+) is bound at residue Asn-224. GTP-binding positions include 224–229, 243–249, and 268–271; these read NAGKSS, TDIAGTT, and DTAG. Ser-228 is a binding site for Mg(2+). K(+)-binding residues include Thr-243, Ile-245, and Thr-248. A Mg(2+)-binding site is contributed by Thr-249. Lys-452 provides a ligand contact to (6S)-5-formyl-5,6,7,8-tetrahydrofolate.

It belongs to the TRAFAC class TrmE-Era-EngA-EngB-Septin-like GTPase superfamily. TrmE GTPase family. Homodimer. Heterotetramer of two MnmE and two MnmG subunits. It depends on K(+) as a cofactor.

The protein resides in the cytoplasm. In terms of biological role, exhibits a very high intrinsic GTPase hydrolysis rate. Involved in the addition of a carboxymethylaminomethyl (cmnm) group at the wobble position (U34) of certain tRNAs, forming tRNA-cmnm(5)s(2)U34. The protein is tRNA modification GTPase MnmE of Haemophilus influenzae (strain ATCC 51907 / DSM 11121 / KW20 / Rd).